Reading from the N-terminus, the 370-residue chain is Phosphate acyltransferase (370 aa).

Residues 349–370 (SAGRAGQDAPDEMAAPGRSEKR) are disordered.

It belongs to the PlsX family. As to quaternary structure, homodimer. Probably interacts with PlsY.

The protein localises to the cytoplasm. It carries out the reaction a fatty acyl-[ACP] + phosphate = an acyl phosphate + holo-[ACP]. It participates in lipid metabolism; phospholipid metabolism. Catalyzes the reversible formation of acyl-phosphate (acyl-PO(4)) from acyl-[acyl-carrier-protein] (acyl-ACP). This enzyme utilizes acyl-ACP as fatty acyl donor, but not acyl-CoA. This is Phosphate acyltransferase from Cereibacter sphaeroides (strain ATCC 17023 / DSM 158 / JCM 6121 / CCUG 31486 / LMG 2827 / NBRC 12203 / NCIMB 8253 / ATH 2.4.1.) (Rhodobacter sphaeroides).